We begin with the raw amino-acid sequence, 215 residues long: Osteoclast-stimulating factor 1 (215 aa).

N-acetylserine is present on S2. The SH3 domain occupies 12-71 (GQVKVFRALYTFEPRTPDELYFEEGDIIYITDMSDTSWWKGTCKGRTGLIPSNYVAEQAE). 3 ANK repeats span residues 72 to 101 (SIDN…GVNG), 105 to 135 (AGST…ELNQ), and 139 to 168 (LGDT…RTDL). Positions 192–215 (KQQGTDGARTLSNAEDYLDDEDSD) are disordered. Residue T201 is modified to Phosphothreonine. Phosphoserine is present on residues S203 and S214.

As to quaternary structure, interacts with C-SRC and SMN1. Interacts with FASLG.

It is found in the cytoplasm. Functionally, induces bone resorption, acting probably through a signaling cascade which results in the secretion of factor(s) enhancing osteoclast formation and activity. This is Osteoclast-stimulating factor 1 (Ostf1) from Mus musculus (Mouse).